A 504-amino-acid chain; its full sequence is Calcium/calmodulin-dependent protein kinase type II (504 aa).

The region spanning 65 to 351 (YQLIENLGDG…IHQFFQHPWI (287 aa)) is the Protein kinase domain. Residues 71–79 (LGDGAFSQV) and lysine 94 each bind ATP. Aspartate 188 functions as the Proton acceptor in the catalytic mechanism. Threonine 252 is modified (phosphothreonine).

The protein belongs to the protein kinase superfamily. CAMK Ser/Thr protein kinase family. CaMK subfamily. Interacts with sty1. Requires Mg(2+) as cofactor. Autophosphorylated.

It localises to the cytoplasm. Its subcellular location is the barrier septum. The protein localises to the forespore membrane. It is found in the ascus epiplasm. It carries out the reaction L-seryl-[protein] + ATP = O-phospho-L-seryl-[protein] + ADP + H(+). The enzyme catalyses L-threonyl-[protein] + ATP = O-phospho-L-threonyl-[protein] + ADP + H(+). Has a role in the regulation of G2/M transition during the mitotic cell cycle. This Schizosaccharomyces pombe (strain 972 / ATCC 24843) (Fission yeast) protein is Calcium/calmodulin-dependent protein kinase type II.